Consider the following 106-residue polypeptide: uncharacterized protein (106 aa).

In terms of domain architecture, HTH hxlR-type spans 1–93; the sequence is MSIFYVLGKK…WEAKWKEAKI (93 aa).

This is an uncharacterized protein from Methanocaldococcus jannaschii (strain ATCC 43067 / DSM 2661 / JAL-1 / JCM 10045 / NBRC 100440) (Methanococcus jannaschii).